Consider the following 717-residue polypeptide: Ribosomal RNA large subunit methyltransferase K/L (717 aa).

Residues 44-155 (DAYKVCIYSY…KQFVNVFLCL (112 aa)) form the THUMP domain.

The protein belongs to the methyltransferase superfamily. RlmKL family.

The protein resides in the cytoplasm. The enzyme catalyses guanosine(2445) in 23S rRNA + S-adenosyl-L-methionine = N(2)-methylguanosine(2445) in 23S rRNA + S-adenosyl-L-homocysteine + H(+). The catalysed reaction is guanosine(2069) in 23S rRNA + S-adenosyl-L-methionine = N(2)-methylguanosine(2069) in 23S rRNA + S-adenosyl-L-homocysteine + H(+). Specifically methylates the guanine in position 2445 (m2G2445) and the guanine in position 2069 (m7G2069) of 23S rRNA. The polypeptide is Ribosomal RNA large subunit methyltransferase K/L (Francisella tularensis subsp. tularensis (strain WY96-3418)).